Here is a 616-residue protein sequence, read N- to C-terminus: Chaperone protein HscA (616 aa).

The protein belongs to the heat shock protein 70 family.

Chaperone involved in the maturation of iron-sulfur cluster-containing proteins. Has a low intrinsic ATPase activity which is markedly stimulated by HscB. Involved in the maturation of IscU. The sequence is that of Chaperone protein HscA from Citrobacter koseri (strain ATCC BAA-895 / CDC 4225-83 / SGSC4696).